The sequence spans 223 residues: MAKRINFTSCLIFTSCFTAFIVSLCLLVSSCVNLVNDVIIPSVHMSRRADITPFIDNYTINFTDLHFFTDGANASVPQPEAIFINSNNFSLYAHNCSARDNCSVHSASITQEGRCYHYSRAKYSFAGCLEFCRSYSPCYYLINPQKHMTAVRQNINESDTYWVGIFKSPKNTWVDLDNSSVTGVHDLYEDSYCAYIGLYTEVPWPSFYCDTPRRCLCGGSKGI.

Residues 1–31 (MAKRINFTSCLIFTSCFTAFIVSLCLLVSSC) form the signal peptide. The 108-residue stretch at 111–218 (QEGRCYHYSR…CDTPRRCLCG (108 aa)) folds into the C-type lectin domain. Residues cysteine 193 and cysteine 209 are joined by a disulfide bond.

This Equine herpesvirus 2 (strain 86/87) (EHV-2) protein is Putative C-type lectin protein 51 (51).